Here is a 450-residue protein sequence, read N- to C-terminus: Phosphoglucosamine mutase (450 aa).

Residue Ser-102 is the Phosphoserine intermediate of the active site. The Mg(2+) site is built by Ser-102, Asp-243, Asp-245, and Asp-247. Ser-102 carries the post-translational modification Phosphoserine.

It belongs to the phosphohexose mutase family. Mg(2+) is required as a cofactor. Activated by phosphorylation.

It catalyses the reaction alpha-D-glucosamine 1-phosphate = D-glucosamine 6-phosphate. Functionally, catalyzes the conversion of glucosamine-6-phosphate to glucosamine-1-phosphate. The sequence is that of Phosphoglucosamine mutase from Rhizobium etli (strain CIAT 652).